Consider the following 262-residue polypeptide: Ornithine carbamoyltransferase (262 aa).

Residues 3–7, Gln30, Arg54, and 81–84 contribute to the carbamoyl phosphate site; these read STRTR and HPTQ. L-ornithine is bound by residues Asn114, Asp178, and 182–183; that span reads SM. Carbamoyl phosphate-binding positions include 219–222 and Thr247; that span reads HCLP.

This sequence belongs to the aspartate/ornithine carbamoyltransferase superfamily. OTCase family.

The protein localises to the cytoplasm. The catalysed reaction is carbamoyl phosphate + L-ornithine = L-citrulline + phosphate + H(+). The protein operates within amino-acid biosynthesis; L-arginine biosynthesis; L-arginine from L-ornithine and carbamoyl phosphate: step 1/3. In terms of biological role, reversibly catalyzes the transfer of the carbamoyl group from carbamoyl phosphate (CP) to the N(epsilon) atom of ornithine (ORN) to produce L-citrulline. In Neisseria lactamica, this protein is Ornithine carbamoyltransferase (argF).